The chain runs to 561 residues: Sesquiterpene synthase 1 (561 aa).

Mg(2+) is bound by residues Asp313, Asp317, Asp458, and Glu466. Positions 313-317 (DDIYD) match the DDXXD motif motif.

The protein belongs to the terpene synthase family. Tpsa subfamily. It depends on Mn(2+) as a cofactor. The cofactor is Mg(2+).

It localises to the cytoplasm. The enzyme catalyses (2E,6E)-farnesyl diphosphate = (1S,8aR)-delta-cadinene + diphosphate. Its pathway is secondary metabolite biosynthesis; terpenoid biosynthesis. Its function is as follows. Involved in the biosynthesis of delta-cadinene. The chain is Sesquiterpene synthase 1 (STS1) from Thapsia garganica (Deadly carrot).